The primary structure comprises 206 residues: Adenine phosphoribosyltransferase (206 aa).

Belongs to the purine/pyrimidine phosphoribosyltransferase family. As to quaternary structure, homodimer.

The protein localises to the cytoplasm. The enzyme catalyses AMP + diphosphate = 5-phospho-alpha-D-ribose 1-diphosphate + adenine. It participates in purine metabolism; AMP biosynthesis via salvage pathway; AMP from adenine: step 1/1. In terms of biological role, catalyzes a salvage reaction resulting in the formation of AMP, that is energically less costly than de novo synthesis. This chain is Adenine phosphoribosyltransferase, found in Burkholderia mallei (strain NCTC 10229).